Reading from the N-terminus, the 245-residue chain is Probable septum site-determining protein MinC (245 aa).

Residues 112–132 show a composition bias toward basic and acidic residues; the sequence is ARERPLESAEPVAPKKPEKPP. The tract at residues 112 to 140 is disordered; sequence ARERPLESAEPVAPKKPEKPPEPTVKPTR.

It belongs to the MinC family. Interacts with MinD and FtsZ.

Cell division inhibitor that blocks the formation of polar Z ring septums. Rapidly oscillates between the poles of the cell to destabilize FtsZ filaments that have formed before they mature into polar Z rings. Prevents FtsZ polymerization. The polypeptide is Probable septum site-determining protein MinC (Pseudomonas fluorescens (strain Pf0-1)).